The following is a 518-amino-acid chain: Sensor protein kinase HptS (518 aa).

2 helical membrane-spanning segments follow: residues 20 to 40 (IFPV…IYIW) and 222 to 242 (GITL…FGFI). Residues 297-513 (EQLIHSIEHT…LICYKIPLSR (217 aa)) form the Histidine kinase domain. His-325 is subject to Phosphohistidine; by autocatalysis.

Autophosphorylated.

The protein localises to the cell membrane. It catalyses the reaction ATP + protein L-histidine = ADP + protein N-phospho-L-histidine.. In terms of biological role, member of the two-component regulatory system HptS/HptR that regulates genes involved in hexose phosphate transport system in response to changes in extracellular phosphate sources. May act as a sensor protein kinase which is autophosphorylated at a histidine residue and transfers its phosphate group to the conserved aspartic acid residue in the regulatory domain of HptS. In turn, HptS antagonizes CcpA-dependent transcription of a subset of CcpA-regulated genes involved in antibiotic susceptibility. This Staphylococcus aureus (strain Mu50 / ATCC 700699) protein is Sensor protein kinase HptS (hptS).